We begin with the raw amino-acid sequence, 566 residues long: O-fucosyltransferase 36 (566 aa).

The span at 1–14 shows a compositional bias: basic and acidic residues; sequence MERNSSDDEEDHQH. Positions 1-37 are disordered; the sequence is MERNSSDDEEDHQHLIPQNDTRIRHREDSVSSNATTI. The chain crosses the membrane as a helical; Signal-anchor for type II membrane protein span at residues 66-86; that stretch reads YVIVFVSLIISIGLLFLLTDP. N-linked (GlcNAc...) asparagine glycosylation is found at Asn-93, Asn-129, Asn-138, Asn-179, and Asn-190. Substrate contacts are provided by residues 415-417 and 531-532; these read HFR and TF.

It belongs to the glycosyltransferase GT106 family.

The protein resides in the membrane. It participates in glycan metabolism. This chain is O-fucosyltransferase 36, found in Arabidopsis thaliana (Mouse-ear cress).